Here is a 163-residue protein sequence, read N- to C-terminus: Ribonuclease H (163 aa).

In terms of domain architecture, RNase H type-1 spans 1-142 (MRKQVAIFTD…CDELARTAAC (142 aa)). Positions 10, 48, 70, and 134 each coordinate Mg(2+).

Belongs to the RNase H family. Monomer. Mg(2+) is required as a cofactor.

It localises to the cytoplasm. It carries out the reaction Endonucleolytic cleavage to 5'-phosphomonoester.. Functionally, endonuclease that specifically degrades the RNA of RNA-DNA hybrids. This chain is Ribonuclease H, found in Sodalis glossinidius (strain morsitans).